The following is a 309-amino-acid chain: Elongation factor Ts (309 aa).

An involved in Mg(2+) ion dislocation from EF-Tu region spans residues 82-85; that stretch reads TDFV.

Belongs to the EF-Ts family.

The protein resides in the cytoplasm. Associates with the EF-Tu.GDP complex and induces the exchange of GDP to GTP. It remains bound to the aminoacyl-tRNA.EF-Tu.GTP complex up to the GTP hydrolysis stage on the ribosome. In Rickettsia africae (strain ESF-5), this protein is Elongation factor Ts.